We begin with the raw amino-acid sequence, 325 residues long: D-alanine--D-alanine ligase (325 aa).

The region spanning 102–300 (KQIFRAAGIP…FTELVERMLQ (199 aa)) is the ATP-grasp domain. Position 130–185 (130–185 (AAELGSPLVIKPSNNGSTVGISIVRDERSFAQGLELARSVSSRIFLERYVPGKEIT)) interacts with ATP. Mg(2+) contacts are provided by D254, E267, and N269.

The protein belongs to the D-alanine--D-alanine ligase family. Requires Mg(2+) as cofactor. Mn(2+) is required as a cofactor.

The protein resides in the cytoplasm. It catalyses the reaction 2 D-alanine + ATP = D-alanyl-D-alanine + ADP + phosphate + H(+). It participates in cell wall biogenesis; peptidoglycan biosynthesis. Its function is as follows. Cell wall formation. This Synechococcus sp. (strain JA-2-3B'a(2-13)) (Cyanobacteria bacterium Yellowstone B-Prime) protein is D-alanine--D-alanine ligase.